We begin with the raw amino-acid sequence, 502 residues long: Glycerol kinase (502 aa).

Thr-14 provides a ligand contact to ADP. ATP contacts are provided by Thr-14, Thr-15, and Ser-16. Thr-14 lines the sn-glycerol 3-phosphate pocket. Arg-18 is an ADP binding site. Sn-glycerol 3-phosphate contacts are provided by Arg-84, Glu-85, and Tyr-136. Residues Arg-84, Glu-85, and Tyr-136 each coordinate glycerol. His-232 is modified (phosphohistidine; by HPr). Asp-246 is a binding site for sn-glycerol 3-phosphate. Positions 246 and 247 each coordinate glycerol. ADP contacts are provided by Thr-268 and Gly-311. Residues Thr-268, Gly-311, Gln-315, and Gly-412 each contribute to the ATP site. Gly-412 and Asn-416 together coordinate ADP.

The protein belongs to the FGGY kinase family. As to quaternary structure, homotetramer and homodimer (in equilibrium). Post-translationally, the phosphoenolpyruvate-dependent sugar phosphotransferase system (PTS), including enzyme I, and histidine-containing protein (HPr) are required for the phosphorylation, which leads to the activation of the enzyme.

The enzyme catalyses glycerol + ATP = sn-glycerol 3-phosphate + ADP + H(+). Its pathway is polyol metabolism; glycerol degradation via glycerol kinase pathway; sn-glycerol 3-phosphate from glycerol: step 1/1. With respect to regulation, activated by phosphorylation and inhibited by fructose 1,6-bisphosphate (FBP). Its function is as follows. Key enzyme in the regulation of glycerol uptake and metabolism. Catalyzes the phosphorylation of glycerol to yield sn-glycerol 3-phosphate. The chain is Glycerol kinase from Streptococcus pneumoniae serotype 19F (strain G54).